Reading from the N-terminus, the 203-residue chain is UPF0301 protein Sde_3637 (203 aa).

The protein belongs to the UPF0301 (AlgH) family.

This is UPF0301 protein Sde_3637 from Saccharophagus degradans (strain 2-40 / ATCC 43961 / DSM 17024).